The chain runs to 287 residues: Ret finger protein-like 4A (287 aa).

The segment at 11 to 53 (CYFCFRCLESPVYLNCGYICCLKCLDSLEKSPEGDGVLCPTCS) adopts an RING-type; degenerate zinc-finger fold. Residues 78–278 (EPQLNFILTM…LSICPVTNPG (201 aa)) form the B30.2/SPRY domain.

Interacts with PSMB1, UBE2A and CCNB1. In terms of tissue distribution, expressed in the ovaries and oocytes (at protein level). Expression restricted to gonads. In testis, present at later stages of spermatogeneis and abundant in elongating spermatids.

The protein localises to the cytoplasm. It is found in the nucleus. The sequence is that of Ret finger protein-like 4A (Rfpl4a) from Mus musculus (Mouse).